Consider the following 511-residue polypeptide: Maturase K (511 aa).

This sequence belongs to the intron maturase 2 family. MatK subfamily.

It is found in the plastid. The protein localises to the chloroplast. In terms of biological role, usually encoded in the trnK tRNA gene intron. Probably assists in splicing its own and other chloroplast group II introns. This is Maturase K from Psathyrostachys juncea (Russian wildrye).